The primary structure comprises 335 residues: Syntaxin-18 (335 aa).

The Cytoplasmic portion of the chain corresponds to 1–309 (MAVDITLLFR…EDIREAIKNN (309 aa)). Composition is skewed to basic and acidic residues over residues 168 to 182 (KLEP…ESTS) and 192 to 208 (KDSE…EKIL). Residues 168–226 (KLEPEPNTKTRESTSSEKVSQSPSKDSEENPATEERPEKILAETQPELGTWGDGKGEDE) form a disordered region. One can recognise a t-SNARE coiled-coil homology domain in the interval 243-305 (IGEMNSLFDE…KEGNEDIREA (63 aa)). The chain crosses the membrane as a helical; Anchor for type IV membrane protein span at residues 310-330 (AGFRVWILFFLVMCSFSLLFL). Topologically, residues 331–335 (DWYDS) are vesicular.

The protein belongs to the syntaxin family. Component of a SNARE complex consisting of STX18, USE1L, BNIP1/SEC20L, and SEC22B. RINT1/TIP20L and ZW10 are associated with the complex through interaction with BNIP1/SEC20L. Interacts directly with USE1L and BNIP1/SEC20L. In terms of tissue distribution, ubiquitous.

Its subcellular location is the endoplasmic reticulum membrane. The protein localises to the golgi apparatus membrane. In terms of biological role, syntaxin that may be involved in targeting and fusion of Golgi-derived retrograde transport vesicles with the ER. This chain is Syntaxin-18 (STX18), found in Homo sapiens (Human).